Here is a 77-residue protein sequence, read N- to C-terminus: MADALERVTKIIVDRLGVDEADVTLEASFKEDLGADSLDVVELVMELEDEFDMEISDEDAEKIATVGDAVNYINSKQ.

Residues 2–77 (ADALERVTKI…DAVNYINSKQ (76 aa)) enclose the Carrier domain. Residue Ser37 is modified to O-(pantetheine 4'-phosphoryl)serine.

The protein belongs to the acyl carrier protein (ACP) family. In terms of processing, 4'-phosphopantetheine is transferred from CoA to a specific serine of apo-ACP by AcpS. This modification is essential for activity because fatty acids are bound in thioester linkage to the sulfhydryl of the prosthetic group.

The protein localises to the cytoplasm. The protein operates within lipid metabolism; fatty acid biosynthesis. In terms of biological role, carrier of the growing fatty acid chain in fatty acid biosynthesis. The sequence is that of Acyl carrier protein from Bacillus licheniformis (strain ATCC 14580 / DSM 13 / JCM 2505 / CCUG 7422 / NBRC 12200 / NCIMB 9375 / NCTC 10341 / NRRL NRS-1264 / Gibson 46).